A 236-amino-acid chain; its full sequence is 4-hydroxy-tetrahydrodipicolinate reductase (236 aa).

NAD(+)-binding positions include 11–16, 92–94, and 116–119; these read GASGRM, GTT, and GSNF. H148 acts as the Proton donor/acceptor in catalysis. H149 is a (S)-2,3,4,5-tetrahydrodipicolinate binding site. The active-site Proton donor is the K152. 158-159 contributes to the (S)-2,3,4,5-tetrahydrodipicolinate binding site; that stretch reads GS.

This sequence belongs to the DapB family.

Its subcellular location is the cytoplasm. The catalysed reaction is (S)-2,3,4,5-tetrahydrodipicolinate + NAD(+) + H2O = (2S,4S)-4-hydroxy-2,3,4,5-tetrahydrodipicolinate + NADH + H(+). The enzyme catalyses (S)-2,3,4,5-tetrahydrodipicolinate + NADP(+) + H2O = (2S,4S)-4-hydroxy-2,3,4,5-tetrahydrodipicolinate + NADPH + H(+). Its pathway is amino-acid biosynthesis; L-lysine biosynthesis via DAP pathway; (S)-tetrahydrodipicolinate from L-aspartate: step 4/4. In terms of biological role, catalyzes the conversion of 4-hydroxy-tetrahydrodipicolinate (HTPA) to tetrahydrodipicolinate. This chain is 4-hydroxy-tetrahydrodipicolinate reductase, found in Xylella fastidiosa (strain M23).